The primary structure comprises 330 residues: Cathepsin K (330 aa).

A signal peptide spans 1–16; that stretch reads MWGLKVVLLLPVMSSA. Positions 17 to 115 are cleaved as a propeptide — activation peptide; sequence LYPEEILDTQ…TLYIPDWEGR (99 aa). N-linked (GlcNAc...) asparagine glycosylation occurs at asparagine 104. Intrachain disulfides connect cysteine 137-cysteine 178, cysteine 171-cysteine 211, and cysteine 270-cysteine 319. Residue cysteine 140 is part of the active site. Active-site residues include histidine 277 and asparagine 297.

Belongs to the peptidase C1 family. In terms of tissue distribution, expressed in the thyroid epithelial cells.

The protein localises to the lysosome. It localises to the secreted. The protein resides in the apical cell membrane. It catalyses the reaction Broad proteolytic activity. With small-molecule substrates and inhibitors, the major determinant of specificity is P2, which is preferably Leu, Met &gt; Phe, and not Arg.. Thiol protease involved in osteoclastic bone resorption and may participate partially in the disorder of bone remodeling. Displays potent endoprotease activity against fibrinogen at acid pH. May play an important role in extracellular matrix degradation. Involved in the release of thyroid hormone thyroxine (T4) by limited proteolysis of TG/thyroglobulin in the thyroid follicle lumen. This is Cathepsin K (CTSK) from Sus scrofa (Pig).